The chain runs to 157 residues: Probable succinate transporter subunit YjjB (157 aa).

4 consecutive transmembrane segments (helical) span residues F8–F28, L57–W77, V87–I107, and F129–W149.

Belongs to the ThrE exporter (TC 2.A.79) family. The transporter is composed of YjjB and YjjP.

Its subcellular location is the cell inner membrane. In terms of biological role, involved in succinate export with YjjP. Both proteins are required for export. The sequence is that of Probable succinate transporter subunit YjjB from Shigella boydii serotype 4 (strain Sb227).